A 122-amino-acid polypeptide reads, in one-letter code: Small ribosomal subunit protein uS13 (122 aa).

The interval arginine 93 to lysine 122 is disordered.

This sequence belongs to the universal ribosomal protein uS13 family. As to quaternary structure, part of the 30S ribosomal subunit. Forms a loose heterodimer with protein S19. Forms two bridges to the 50S subunit in the 70S ribosome.

In terms of biological role, located at the top of the head of the 30S subunit, it contacts several helices of the 16S rRNA. In the 70S ribosome it contacts the 23S rRNA (bridge B1a) and protein L5 of the 50S subunit (bridge B1b), connecting the 2 subunits; these bridges are implicated in subunit movement. Contacts the tRNAs in the A and P-sites. The protein is Small ribosomal subunit protein uS13 of Corynebacterium efficiens (strain DSM 44549 / YS-314 / AJ 12310 / JCM 11189 / NBRC 100395).